Here is a 303-residue protein sequence, read N- to C-terminus: uncharacterized protein (303 aa).

The region spanning 173–300 is the Fe2OG dioxygenase domain; that stretch reads KLPELLGQLN…RFTVNGWIRK (128 aa).

Fe(2+) is required as a cofactor. L-ascorbate serves as cofactor.

This is an uncharacterized protein from Synechocystis sp. (strain ATCC 27184 / PCC 6803 / Kazusa).